We begin with the raw amino-acid sequence, 703 residues long: 1,4-alpha-glucan-branching enzyme (703 aa).

2 residues coordinate (1,4-alpha-D-glucosyl)n: tryptophan 93 and lysine 130. Aspartate 355 (nucleophile) is an active-site residue. The active-site Proton donor is glutamate 415.

This sequence belongs to the glycosyl hydrolase 13 family. GlgB subfamily.

Its subcellular location is the cytoplasm. It carries out the reaction Transfers a segment of a (1-&gt;4)-alpha-D-glucan chain to a primary hydroxy group in a similar glucan chain.. The protein operates within glycan biosynthesis; glycogen biosynthesis. In terms of biological role, glycogen-branching enzyme participates in the glycogen biosynthetic process along with glycogenin and glycogen synthase. Generates alpha-1,6-glucosidic branches from alpha-1,4-linked glucose chains, to increase solubility of the glycogen polymer. This chain is 1,4-alpha-glucan-branching enzyme (GLC3), found in Eremothecium gossypii (strain ATCC 10895 / CBS 109.51 / FGSC 9923 / NRRL Y-1056) (Yeast).